Reading from the N-terminus, the 113-residue chain is Protein Asterix (113 aa).

A helical transmembrane segment spans residues 81–97 (IVSSFMLSVSAVVMSYL).

It belongs to the Asterix family.

The protein resides in the membrane. The sequence is that of Protein Asterix from Caenorhabditis elegans.